The primary structure comprises 104 residues: Large ribosomal subunit protein uL24 (104 aa).

Belongs to the universal ribosomal protein uL24 family. In terms of assembly, part of the 50S ribosomal subunit.

Its function is as follows. One of two assembly initiator proteins, it binds directly to the 5'-end of the 23S rRNA, where it nucleates assembly of the 50S subunit. Functionally, one of the proteins that surrounds the polypeptide exit tunnel on the outside of the subunit. The chain is Large ribosomal subunit protein uL24 from Saccharopolyspora erythraea (strain ATCC 11635 / DSM 40517 / JCM 4748 / NBRC 13426 / NCIMB 8594 / NRRL 2338).